The sequence spans 367 residues: Transcription factor aptf-2 (367 aa).

Positions 29 to 49 are disordered; that stretch reads VPATKETGPSSSAECSTQPAV. Positions 36 to 47 are enriched in polar residues; sequence GPSSSAECSTQP. The H-S-H (helix-span-helix), dimerization stretch occupies residues 220–354; the sequence is AKQKAFPNKV…GVASELRRLT (135 aa).

The protein belongs to the AP-2 family. As to quaternary structure, binds DNA as a dimer.

It is found in the nucleus. The protein localises to the cytoplasm. Sequence-specific DNA-binding protein that interacts with enhancer elements to regulate transcription of selected genes. Required for neuroblast and epidermal morphogenesis, perhaps acting in cooperation with transcription factor aptf-4. In Caenorhabditis elegans, this protein is Transcription factor aptf-2.